Here is a 393-residue protein sequence, read N- to C-terminus: NAD(P)H-quinone oxidoreductase subunit H, chloroplastic (393 aa).

The protein belongs to the complex I 49 kDa subunit family. NDH is composed of at least 16 different subunits, 5 of which are encoded in the nucleus.

It is found in the plastid. Its subcellular location is the chloroplast thylakoid membrane. The enzyme catalyses a plastoquinone + NADH + (n+1) H(+)(in) = a plastoquinol + NAD(+) + n H(+)(out). The catalysed reaction is a plastoquinone + NADPH + (n+1) H(+)(in) = a plastoquinol + NADP(+) + n H(+)(out). NDH shuttles electrons from NAD(P)H:plastoquinone, via FMN and iron-sulfur (Fe-S) centers, to quinones in the photosynthetic chain and possibly in a chloroplast respiratory chain. The immediate electron acceptor for the enzyme in this species is believed to be plastoquinone. Couples the redox reaction to proton translocation, and thus conserves the redox energy in a proton gradient. In Morus indica (Mulberry), this protein is NAD(P)H-quinone oxidoreductase subunit H, chloroplastic.